We begin with the raw amino-acid sequence, 138 residues long: ER-derived vesicles protein ERV14 (138 aa).

Over 2-6 the chain is Cytoplasmic; it reads GAWLF. The chain crosses the membrane as a helical span at residues 7–27; it reads ILAVVVNCINLFGQVHFTILY. The Extracellular segment spans residues 28–52; sequence ADLEADYINPIELCSKVNKLITPEA. A helical transmembrane segment spans residues 53–73; that stretch reads ALHGALSLLFLLNGYWFVFLL. The Cytoplasmic portion of the chain corresponds to 74–111; that stretch reads NLPVLAYNLNKIYNKVQLLDATEIFRTLGKHKRESFLK. A helical transmembrane segment spans residues 112–132; sequence LGFHLLMFFFYLYRMIMALIA. Residues 133-138 lie on the Extracellular side of the membrane; the sequence is ESGDDF.

The protein belongs to the cornichon family.

The protein resides in the endoplasmic reticulum membrane. It is found in the golgi apparatus membrane. Could regulate export of the bud site and axial growth sites selection protein AXL2 and possibly other secretory proteins from the endoplasmic reticulum in COPII-coated vesicles. Seems to be required for axial budding pattern in haploid cells. In Saccharomyces cerevisiae (strain ATCC 204508 / S288c) (Baker's yeast), this protein is ER-derived vesicles protein ERV14 (ERV14).